The sequence spans 430 residues: Adenylosuccinate synthetase (430 aa).

GTP-binding positions include 13–19 (GDEGKGK) and 41–43 (GHT). Asp-14 functions as the Proton acceptor in the catalytic mechanism. Asp-14 and Gly-41 together coordinate Mg(2+). Residues 14–17 (DEGK), 39–42 (NAGH), Thr-130, Arg-144, Gln-225, Thr-240, and Arg-304 contribute to the IMP site. Residue His-42 is the Proton donor of the active site. 300-306 (ASTGRPR) contacts substrate. Residues Arg-306, 332-334 (KLD), and 414-416 (STG) each bind GTP.

It belongs to the adenylosuccinate synthetase family. As to quaternary structure, homodimer. Requires Mg(2+) as cofactor.

It localises to the cytoplasm. It catalyses the reaction IMP + L-aspartate + GTP = N(6)-(1,2-dicarboxyethyl)-AMP + GDP + phosphate + 2 H(+). It functions in the pathway purine metabolism; AMP biosynthesis via de novo pathway; AMP from IMP: step 1/2. In terms of biological role, plays an important role in the de novo pathway of purine nucleotide biosynthesis. Catalyzes the first committed step in the biosynthesis of AMP from IMP. This Xanthomonas axonopodis pv. citri (strain 306) protein is Adenylosuccinate synthetase.